The primary structure comprises 264 residues: Somatomedin-B and thrombospondin type-1 domain-containing protein (264 aa).

An N-terminal signal peptide occupies residues 1-20; the sequence is MRTLWMALCVLARLWPGALA. One can recognise an SMB domain in the interval 24-75; sequence DAGRCCPGRDPACFASGWRQDRVYGTCFCDQACRLTGDCCFDYARACPARPC. Cystine bridges form between Cys-28–Cys-36, Cys-28–Cys-52, Cys-36–Cys-70, Cys-50–Cys-52, Cys-50–Cys-63, Cys-56–Cys-62, and Cys-63–Cys-70. One can recognise a TSP type-1 domain in the interval 74-127; that stretch reads PCIVGEWSPWSGCASQCRPTARVRRRAVQQEPQNGGEPCPALEERAGCLEYATP. Asn-227 carries N-linked (GlcNAc...) asparagine glycosylation.

Belongs to the thrombospondin family.

The protein localises to the secreted. Its subcellular location is the extracellular space. It is found in the extracellular matrix. The protein is Somatomedin-B and thrombospondin type-1 domain-containing protein (SBSPON) of Bos taurus (Bovine).